The following is a 340-amino-acid chain: NADH-quinone oxidoreductase subunit H (340 aa).

Transmembrane regions (helical) follow at residues 9–29, 81–101, 113–133, 158–178, 184–204, 221–240, 245–264, 273–293, and 316–336; these read IWIIIKIVLILVPLLVAVAFI, LIAPILSLVPALAAWAVIPFA, LLFLFAMTSLGVYGILVAGWA, GFALVGVLLAAGTMNLQGIVL, LWHWFWLPLLPLFVTYWITAV, IVAGFHVEYAGVTFALFFLA, MVLVSAIATVIFLGGWLSPF, LFAWVPGIVWFVLKLSLFIFT, and VLIPVTLVWIIILALAIEFHW.

It belongs to the complex I subunit 1 family. As to quaternary structure, NDH-1 is composed of 14 different subunits. Subunits NuoA, H, J, K, L, M, N constitute the membrane sector of the complex.

It localises to the cell inner membrane. The enzyme catalyses a quinone + NADH + 5 H(+)(in) = a quinol + NAD(+) + 4 H(+)(out). In terms of biological role, NDH-1 shuttles electrons from NADH, via FMN and iron-sulfur (Fe-S) centers, to quinones in the respiratory chain. The immediate electron acceptor for the enzyme in this species is believed to be ubiquinone. Couples the redox reaction to proton translocation (for every two electrons transferred, four hydrogen ions are translocated across the cytoplasmic membrane), and thus conserves the redox energy in a proton gradient. This subunit may bind ubiquinone. The sequence is that of NADH-quinone oxidoreductase subunit H from Coxiella burnetii (strain CbuK_Q154) (Coxiella burnetii (strain Q154)).